The chain runs to 311 residues: Transcription factor bHLH145 (311 aa).

Positions 253 to 302 constitute a bHLH domain; that stretch reads FLKRSKLSSNKIGEEKIFETVSLLRSVVPGEELVDPILVIDRAIDYLKSL.

In terms of assembly, homodimer.

Its subcellular location is the nucleus. The chain is Transcription factor bHLH145 (BHLH145) from Arabidopsis thaliana (Mouse-ear cress).